Reading from the N-terminus, the 293-residue chain is Acetylglutamate kinase (293 aa).

Substrate-binding positions include 68-69 (GG), R90, and N189.

Belongs to the acetylglutamate kinase family. ArgB subfamily.

The protein resides in the cytoplasm. It carries out the reaction N-acetyl-L-glutamate + ATP = N-acetyl-L-glutamyl 5-phosphate + ADP. Its pathway is amino-acid biosynthesis; L-arginine biosynthesis; N(2)-acetyl-L-ornithine from L-glutamate: step 2/4. In terms of biological role, catalyzes the ATP-dependent phosphorylation of N-acetyl-L-glutamate. This is Acetylglutamate kinase from Caldicellulosiruptor bescii (strain ATCC BAA-1888 / DSM 6725 / KCTC 15123 / Z-1320) (Anaerocellum thermophilum).